The sequence spans 694 residues: Transcription activator of gluconeogenesis Pc22g08580 (694 aa).

The interval 1 to 61 (MNMETKNGSP…DPSRPRRKKA (61 aa)) is disordered. The segment covering 17-55 (SGERDSADITEHEQMDVKPKTNGDSKADRKAANAKDPSR) has biased composition (basic and acidic residues). Residues 65–93 (CFACQRAHLTCGDERPCQRCIKRGLQDAC) constitute a DNA-binding region (zn(2)-C6 fungal-type). Disordered regions lie at residues 126 to 240 (TLRN…GPFF), 276 to 300 (AAGD…AQFS), and 552 to 582 (TGGS…GTGR). A compositionally biased stretch (polar residues) spans 132-141 (PISRNGTNAV). Over residues 142-171 (NSNQQHSQQHPQQPTNPTNNNFYPTPQTQT) the composition is skewed to low complexity. 3 stretches are compositionally biased toward polar residues: residues 172 to 234 (GSYN…SQNP), 281 to 300 (PTDS…AQFS), and 552 to 581 (TGGS…SGTG).

Belongs to the ERT1/acuK family.

It is found in the nucleus. Transcription factor which regulates nonfermentable carbon utilization. Activator of gluconeogenetic genes. The chain is Transcription activator of gluconeogenesis Pc22g08580 from Penicillium rubens (strain ATCC 28089 / DSM 1075 / NRRL 1951 / Wisconsin 54-1255) (Penicillium chrysogenum).